The following is a 529-amino-acid chain: MGNGLIYISLEVIVACLISALAMYYVMKKIYYARGQAVLKSASAKAKLMEFQAKSFVEAEEMRMKSQECKLQQQYENKNLQLKAHFDKKEAYLKHLEAQHKEFVRDEKRYLEKEKQELEKERQILEQEKENFKKQYATCKENQSKALDVMLNYMAYTKEEIKSMILKQLEEELEAQKSALIRRYEKEAKEESKKKSYAILAEATARFAGNYAIENFTNRIALPCSEYIGRVIGKDGKNIEAFKKISGVDIEFSEGDKELCLSSFNIFRREVASETLKILIEDGRIQPNRIEEVYHRVVRNMEKELLSEGQSVVLELELGAMEDELKILLGKMRYRSSFGQNALQHSKEVALLAGLIAEQLGGDKKLARRAGILHDIGKALTQELGRDHVSLGVEVCKRNKEDPVVINAIYAHHGHEEIMSIECASVCAADALSAGRPGARRKSDEEYAKRMQALEEIALGFEGVEKAYAMESGRELRVIVKSNQVRDNQVPIIARKIAKKIEESAQYVGEVGVQVVRESRFKTTATLKQ.

The chain crosses the membrane as a helical span at residues 4–24 (GLIYISLEVIVACLISALAMY). The region spanning 216–297 (FTNRIALPCS…NRIEEVYHRV (82 aa)) is the KH domain. Residues 342–435 (ALQHSKEVAL…VCAADALSAG (94 aa)) enclose the HD domain.

This sequence belongs to the RNase Y family.

The protein resides in the cell membrane. Functionally, endoribonuclease that initiates mRNA decay. This is Ribonuclease Y from Helicobacter acinonychis (strain Sheeba).